The primary structure comprises 201 residues: MIAIIDYGAGNIKSLQFALDKLNKHSIVTTEAAEIKQADSIILPGVGAFKDAMEAIRQLQLDSVIQEEAQKGKPILGICLGMQLFYEQSLENGDWEGLGLLKGSIKRISGEVKVPHMGWNTLDIQQASPLFDSKLENPYVYFVHSYAVSSFEENTLLASSQYGQLIPAIVQKGNITGMQFHPEKSGEFGIELLKRYEEMIR.

The Glutamine amidotransferase type-1 domain maps to 1 to 201; the sequence is MIAIIDYGAG…LLKRYEEMIR (201 aa). Cys-79 functions as the Nucleophile in the catalytic mechanism. Active-site residues include His-181 and Glu-183.

In terms of assembly, heterodimer of HisH and HisF.

It is found in the cytoplasm. It catalyses the reaction 5-[(5-phospho-1-deoxy-D-ribulos-1-ylimino)methylamino]-1-(5-phospho-beta-D-ribosyl)imidazole-4-carboxamide + L-glutamine = D-erythro-1-(imidazol-4-yl)glycerol 3-phosphate + 5-amino-1-(5-phospho-beta-D-ribosyl)imidazole-4-carboxamide + L-glutamate + H(+). It carries out the reaction L-glutamine + H2O = L-glutamate + NH4(+). It functions in the pathway amino-acid biosynthesis; L-histidine biosynthesis; L-histidine from 5-phospho-alpha-D-ribose 1-diphosphate: step 5/9. IGPS catalyzes the conversion of PRFAR and glutamine to IGP, AICAR and glutamate. The HisH subunit catalyzes the hydrolysis of glutamine to glutamate and ammonia as part of the synthesis of IGP and AICAR. The resulting ammonia molecule is channeled to the active site of HisF. The polypeptide is Imidazole glycerol phosphate synthase subunit HisH (Oceanobacillus iheyensis (strain DSM 14371 / CIP 107618 / JCM 11309 / KCTC 3954 / HTE831)).